A 154-amino-acid chain; its full sequence is Protein X (154 aa).

The segment at 68-117 (PCALRFTSARRMETTVNAHQILPKVLHKRTLGLSAMSTTDLEAYFKDCLF) is mitochondrial targeting sequence.

It belongs to the orthohepadnavirus protein X family. In terms of assembly, may form homodimer. May interact with host CEBPA, CFLAR, CREB1, DDB1, E4F1, HBXIP, HSPD1/HSP60, NFKBIA, POLR2E and SMAD4. Interacts with host SMC5-SMC6 complex and induces its degradation. Interacts with host TRPC4AP; leading to prevent ubiquitination of TRPC4AP. Interacts with host PLSCR1; this interaction promotes ubiquitination and degradation of HBx and impairs HBx-mediated cell proliferation. A fraction may be phosphorylated in insect cells and HepG2 cells, a human hepatoblastoma cell line. Phosphorylated in vitro by host protein kinase C or mitogen-activated protein kinase. N-acetylated in insect cells.

Its subcellular location is the host cytoplasm. It is found in the host nucleus. It localises to the host mitochondrion. In terms of biological role, multifunctional protein that plays a role in silencing host antiviral defenses and promoting viral transcription. Does not seem to be essential for HBV infection. May be directly involved in development of cirrhosis and liver cancer (hepatocellular carcinoma). Most of cytosolic activities involve modulation of cytosolic calcium. The effect on apoptosis is controversial depending on the cell types in which the studies have been conducted. May induce apoptosis by localizing in mitochondria and causing loss of mitochondrial membrane potential. May also modulate apoptosis by binding host CFLAR, a key regulator of the death-inducing signaling complex (DISC). Promotes viral transcription by using the host E3 ubiquitin ligase DDB1 to target the SMC5-SMC6 complex to proteasomal degradation. This host complex would otherwise bind to viral episomal DNA, and prevents its transcription. Moderately stimulates transcription of many different viral and cellular transcription elements. Promoters and enhancers stimulated by HBx contain DNA binding sites for NF-kappa-B, AP-1, AP-2, c-EBP, ATF/CREB, or the calcium-activated factor NF-AT. This chain is Protein X, found in Hepatitis B virus genotype E subtype ayw4 (isolate Kou) (HBV-E).